A 729-amino-acid polypeptide reads, in one-letter code: MTSPEGAQNKEIDCLSPEAQRLAEARLAAKRAARAEAREIRMKELERQQKEVEERPDKDFAEKGSRNMPSLSAATLASLGGTSSRRGSGDTSISMDTEASIREIKDSLAEVEEKYKKAMVSNAQLDNEKTNFMYQVDTLKDMLLELEEQLAESQRQYEEKNKEFEREKHAHSILQFQFAEVKEALRQREEMLEKHGIILNSEIATNGETSDTVNDVGYQAPTKITKEELNALKSAGEGTLGKAKEVEVKKEIVEKVGQRETLQNSEQEQPKPNTGKDCVDRGVSHPGEKAENQRPAEDSALSPGPLAGAKCEQQVQSQDQENTSDLKNSEQIESHKVTNKSDSRASNSPEQSSCLEGLDSEVPGPTEDLKTDLGKGSFEPCPDYILGQTAEIDKVTCTDSRGTGGNQREDEVQAGDTTVEDQVGTVASGPAKQSKGTENHGESCLKDGLGQSSERELTQEVAEPEEAIVQIPQAGGENTITKADDAEGRDEKPIQAEAQASPGAPINQSGHQDTTGPGSTDAQRTPPHAKERKKQGKSEQQAEALDSPQKKTKNKKKKNKKKKAATPAETCRDANEELNCQDPDVGDMEEEERLQVTDKKQASGSPEQKIRAGSREPVEDPQSGSSGKQNKVEEDGPTEGPTDILDQNSPQCEDREISPVGEKGPQCDTSQIGSEEGHVTSQHGGQAVENHNLDNSDLSGQLEGFNSESGGQAREEVGNSKSKEDCTMS.

The residue at position 2 (Thr2) is an N-acetylthreonine. Position 16 is a phosphoserine (Ser16). Over residues 40 to 65 (IRMKELERQQKEVEERPDKDFAEKGS) the composition is skewed to basic and acidic residues. The segment at 40 to 98 (IRMKELERQQKEVEERPDKDFAEKGSRNMPSLSAATLASLGGTSSRRGSGDTSISMDTE) is disordered. Residues 78–94 (SLGGTSSRRGSGDTSIS) show a composition bias toward low complexity. A phosphoserine mark is found at Ser83, Ser84, Ser88, Asp90, Ser92, and Thr97. Residues 94–194 (SMDTEASIRE…LRQREEMLEK (101 aa)) adopt a coiled-coil conformation. Lys249 participates in a covalent cross-link: Glycyl lysine isopeptide (Lys-Gly) (interchain with G-Cter in SUMO1). The interval 253–729 (VEKVGQRETL…SKSKEDCTMS (477 aa)) is disordered. A compositionally biased stretch (polar residues) spans 260–272 (ETLQNSEQEQPKP). Residues 277–297 (DCVDRGVSHPGEKAENQRPAE) are compositionally biased toward basic and acidic residues. At Ser302 the chain carries Phosphoserine. Residues 313-326 (QQVQSQDQENTSDL) are compositionally biased toward polar residues. Over residues 327–343 (KNSEQIESHKVTNKSDS) the composition is skewed to basic and acidic residues. The span at 344-354 (RASNSPEQSSC) shows a compositional bias: polar residues. 2 positions are modified to phosphoserine: Ser346 and Ser348. Basic and acidic residues-rich tracts occupy residues 435–445 (KGTENHGESCL) and 482–494 (KADDAEGRDEKPI). The DNA-binding stretch occupies residues 465-567 (EEAIVQIPQA…KNKKKKAATP (103 aa)). Polar residues predominate over residues 506 to 523 (INQSGHQDTTGPGSTDAQ). Phosphoserine occurs at positions 538 and 547. Over residues 550–564 (KKTKNKKKKNKKKKA) the composition is skewed to basic residues. The span at 608-618 (QKIRAGSREPV) shows a compositional bias: basic and acidic residues. Phosphoserine occurs at positions 614 and 670. 2 stretches are compositionally biased toward polar residues: residues 667–684 (CDTSQIGSEEGHVTSQHG) and 693–710 (LDNSDLSGQLEGFNSESG). The span at 713 to 729 (AREEVGNSKSKEDCTMS) shows a compositional bias: basic and acidic residues.

It belongs to the LRRFIP family. In terms of assembly, homodimer. May also form higher oligomers. Interacts with FLII. Interacts with MYD88. Competes with FLII for MyD88-binding, even in the absence of LPS. In terms of tissue distribution, ubiquitously expressed.

The protein resides in the nucleus. The protein localises to the cytoplasm. Functionally, transcriptional repressor which preferentially binds to the GC-rich consensus sequence (5'-AGCCCCCGGCG-3') and may regulate expression of TNF, EGFR and PDGFA. May control smooth muscle cells proliferation following artery injury through PDGFA repression. May also bind double-stranded RNA. Positively regulates Toll-like receptor (TLR) signaling in response to agonist probably by competing with the negative FLII regulator for MYD88-binding. The polypeptide is Leucine-rich repeat flightless-interacting protein 1 (Lrrfip1) (Mus musculus (Mouse)).